The chain runs to 627 residues: MSLDISKYPILALANTPDELRSLPKESLPALCDELRTYLLNSVSKTSGHLASGLGVVELTVALHYVYNTPFDQLIWDVGHQAYPHKILTGRREQLSTIRQKDGLHPFPWRGESEYDVLSVGHSSTSISAALGLAICAEKEQENRKIVSVIGDGAITAGMAFEALNHAGDIHPDMLVVLNDNEMSISENVGALNNQLARVLSGSLYTSIREGGKKVLSGTPTIKELLKRTEEHLKGMVVPGTMFEELGFNYIGPVDGHDVNELVRTLKNMRNLKGPQFLHIMTKKGKGYEPAEKDPISYHGVPKFDPSNTSLPKSSGGKPTFSAVFGDFLCDMAKEDSKLMAITPAMREGSGMVRFSKEYPNQYFDAAIAEQHAVTLASGMAIAGYNPIVAIYSTFLQRGYDQLIHDVAIMDLPVMFAIDRAGLVGADGQTHQGAFDISFMRCIPNMVIMTPSDENECRQMLYTGHKHTGPSAVRYPRGSATGIQVNNEMQALEIGKGRLLRETKVTDKGERVAILNFGTFLANSLEAAEKLDATVADMRFAKPLDEALICELVTNHDVLVTIEENAISGGAGSGVIEFLMKNRLVKPVLQLGLPDEFIAQGTQEEMHIELKLDSNGIEQQIRDYLDL.

Thiamine diphosphate is bound by residues His-80 and 121-123; that span reads GHS. Asp-152 contributes to the Mg(2+) binding site. Thiamine diphosphate-binding positions include 153–154, Asn-181, Tyr-288, and Glu-370; that span reads GA. Mg(2+) is bound at residue Asn-181.

Belongs to the transketolase family. DXPS subfamily. In terms of assembly, homodimer. The cofactor is Mg(2+). Requires thiamine diphosphate as cofactor.

The catalysed reaction is D-glyceraldehyde 3-phosphate + pyruvate + H(+) = 1-deoxy-D-xylulose 5-phosphate + CO2. The protein operates within metabolic intermediate biosynthesis; 1-deoxy-D-xylulose 5-phosphate biosynthesis; 1-deoxy-D-xylulose 5-phosphate from D-glyceraldehyde 3-phosphate and pyruvate: step 1/1. Functionally, catalyzes the acyloin condensation reaction between C atoms 2 and 3 of pyruvate and glyceraldehyde 3-phosphate to yield 1-deoxy-D-xylulose-5-phosphate (DXP). This Aliivibrio fischeri (strain MJ11) (Vibrio fischeri) protein is 1-deoxy-D-xylulose-5-phosphate synthase.